Consider the following 77-residue polypeptide: Large ribosomal subunit protein bL28 (77 aa).

It belongs to the bacterial ribosomal protein bL28 family.

The protein is Large ribosomal subunit protein bL28 of Leptothrix cholodnii (strain ATCC 51168 / LMG 8142 / SP-6) (Leptothrix discophora (strain SP-6)).